Reading from the N-terminus, the 259-residue chain is PF03932 family protein CutC (259 aa).

This sequence belongs to the CutC family. In terms of assembly, homodimer.

The protein resides in the cytoplasm. The polypeptide is PF03932 family protein CutC (Salmonella typhi).